The following is a 372-amino-acid chain: Cytochrome b (372 aa).

4 helical membrane-spanning segments follow: residues 25–45 (FGSM…FLAI), 69–90 (WIMQ…YIHI), 105–125 (WLSG…GYVL), and 170–190 (FFAL…IHII). Residues histidine 75 and histidine 89 each contribute to the heme b site. Heme b is bound by residues histidine 174 and histidine 188. Position 193 (histidine 193) interacts with a ubiquinone. 4 helical membrane passes run 218-238 (YKDM…LSFS), 280-300 (LGGT…PFTH), 312-332 (LSQI…WTAT), and 339-358 (FISI…IMNP).

This sequence belongs to the cytochrome b family. As to quaternary structure, the cytochrome bc1 complex contains 3 respiratory subunits (MT-CYB, CYC1 and UQCRFS1), 2 core proteins (UQCRC1 and UQCRC2) and probably 6 low-molecular weight proteins. Heme b serves as cofactor.

The protein localises to the mitochondrion inner membrane. In terms of biological role, component of the ubiquinol-cytochrome c reductase complex (complex III or cytochrome b-c1 complex) that is part of the mitochondrial respiratory chain. The b-c1 complex mediates electron transfer from ubiquinol to cytochrome c. Contributes to the generation of a proton gradient across the mitochondrial membrane that is then used for ATP synthesis. In Walterinnesia aegyptia (Desert black snake), this protein is Cytochrome b (MT-CYB).